A 176-amino-acid polypeptide reads, in one-letter code: Large ribosomal subunit protein eL20 (176 aa).

This sequence belongs to the eukaryotic ribosomal protein eL20 family. As to quaternary structure, component of the large ribosomal subunit.

The protein resides in the cytoplasm. Its function is as follows. Component of the large ribosomal subunit. The ribosome is a large ribonucleoprotein complex responsible for the synthesis of proteins in the cell. The protein is Large ribosomal subunit protein eL20 (rpl18a) of Salmo salar (Atlantic salmon).